The sequence spans 209 residues: Ribosomal RNA large subunit methyltransferase E (209 aa).

Residues glycine 63, tryptophan 65, aspartate 83, aspartate 99, and aspartate 124 each contribute to the S-adenosyl-L-methionine site. Lysine 164 functions as the Proton acceptor in the catalytic mechanism.

Belongs to the class I-like SAM-binding methyltransferase superfamily. RNA methyltransferase RlmE family.

The protein resides in the cytoplasm. The enzyme catalyses uridine(2552) in 23S rRNA + S-adenosyl-L-methionine = 2'-O-methyluridine(2552) in 23S rRNA + S-adenosyl-L-homocysteine + H(+). Its function is as follows. Specifically methylates the uridine in position 2552 of 23S rRNA at the 2'-O position of the ribose in the fully assembled 50S ribosomal subunit. The polypeptide is Ribosomal RNA large subunit methyltransferase E (Shewanella sp. (strain MR-7)).